The sequence spans 116 residues: Large ribosomal subunit protein bL20 (116 aa).

It belongs to the bacterial ribosomal protein bL20 family.

Its function is as follows. Binds directly to 23S ribosomal RNA and is necessary for the in vitro assembly process of the 50S ribosomal subunit. It is not involved in the protein synthesizing functions of that subunit. This is Large ribosomal subunit protein bL20 from Desulfatibacillum aliphaticivorans.